Reading from the N-terminus, the 73-residue chain is Translation initiation factor IF-1 3 (73 aa).

One can recognise an S1-like domain in the interval 1 to 72 (MAKEELVEFG…TKGRINYRHK (72 aa)).

This sequence belongs to the IF-1 family. Component of the 30S ribosomal translation pre-initiation complex which assembles on the 30S ribosome in the order IF-2 and IF-3, IF-1 and N-formylmethionyl-tRNA(fMet); mRNA recruitment can occur at any time during PIC assembly.

Its subcellular location is the cytoplasm. Its function is as follows. One of the essential components for the initiation of protein synthesis. Stabilizes the binding of IF-2 and IF-3 on the 30S subunit to which N-formylmethionyl-tRNA(fMet) subsequently binds. Helps modulate mRNA selection, yielding the 30S pre-initiation complex (PIC). Upon addition of the 50S ribosomal subunit IF-1, IF-2 and IF-3 are released leaving the mature 70S translation initiation complex. The polypeptide is Translation initiation factor IF-1 3 (Cupriavidus metallidurans (strain ATCC 43123 / DSM 2839 / NBRC 102507 / CH34) (Ralstonia metallidurans)).